Consider the following 353-residue polypeptide: Inactive ubiquitin thioesterase OTULINL (353 aa).

The segment at 1–80 (MKATRSAPRE…KWWIGYLQRK (80 aa)) is required for membrane binding. The OTU domain maps to 125–353 (KCVRPVKRDN…NDHQYHIPVF (229 aa)).

Belongs to the peptidase C65 family. Otulin subfamily. In terms of assembly, does not bind ubiquitin or ubiquitin-like proteins.

The protein resides in the cytoplasm. It localises to the endoplasmic reticulum membrane. The protein localises to the nucleus envelope. Its function is as follows. Lacks deubiquitinase activity. The sequence is that of Inactive ubiquitin thioesterase OTULINL from Rattus norvegicus (Rat).